Consider the following 889-residue polypeptide: Extended synaptotagmin-3 (889 aa).

The segment at 1-65 is disordered; it reads MAQGDPGGQT…GPRDPGQGGA (65 aa). At 1 to 66 the chain is on the cytoplasmic side; the sequence is MAQGDPGGQT…PRDPGQGGAG (66 aa). Composition is skewed to basic and acidic residues over residues 17-28 and 41-58; these read TDKKPDEPKATE and PGGE…KGPR. The next 2 helical transmembrane spans lie at 67–91 and 92–112; these read EALA…FPVY and LCGR…LWMF. At 113–889 the chain is on the cytoplasmic side; that stretch reads WTRNKKFKLA…ELTPTGLPTS (777 aa). The SMP-LTD domain maps to 155–333; sequence DVERVEWLNK…LPNRFTVPLS (179 aa). 2 consecutive C2 domains span residues 331-452 and 468-618; these read PLSS…DEWF and WLSL…STIK. Positions 363, 364, 376, 423, 424, 425, 427, 429, and 430 each coordinate Ca(2+). The tract at residues 649 to 724 is disordered; it reads SIKRAQSQQH…GAVPESHTPS (76 aa). Basic residues predominate over residues 658–671; that stretch reads HKSHGKSHQAHHQA. Composition is skewed to low complexity over residues 672–682 and 691–714; these read HQTQQNHTVQQ and ISTT…PNST. Residues 757–879 enclose the C2 3 domain; sequence MTGEVEVSVR…DLVKGFTKWF (123 aa). Positions 804–811 are required for phosphatidylinositol 4,5-bisphosphate-dependent location at the cell membrane; sequence RKWSGRKK.

It belongs to the extended synaptotagmin family.

Its subcellular location is the cell membrane. It is found in the endoplasmic reticulum membrane. Functionally, tethers the endoplasmic reticulum to the cell membrane and promotes the formation of appositions between the endoplasmic reticulum and the cell membrane. Binds glycerophospholipids in a barrel-like domain and may play a role in cellular lipid transport. This is Extended synaptotagmin-3 (esyt3) from Xenopus tropicalis (Western clawed frog).